Reading from the N-terminus, the 914-residue chain is NADH-quinone oxidoreductase subunit G (914 aa).

One can recognise a 2Fe-2S ferredoxin-type domain in the interval 1-83 (MATIHVDGKE…GTFISIDDSE (83 aa)). Residues Cys-34, Cys-45, Cys-48, and Cys-67 each coordinate [2Fe-2S] cluster. Residues 83–122 (EAKAFRESVVEWLMTNHPHDCPVCEEGGNCHLQDMTVMTG) form the 4Fe-4S His(Cys)3-ligated-type domain. The [4Fe-4S] cluster site is built by His-99, Cys-103, Cys-106, Cys-112, Cys-151, Cys-154, Cys-157, Cys-201, Cys-228, Cys-231, Cys-235, and Cys-263. The 4Fe-4S Mo/W bis-MGD-type domain occupies 221-277 (MQFAPSICQQCSVGCNTSPGERYGELRRIENRYNGSVNHYFMCDRGRFGYGYVNLKD).

Belongs to the complex I 75 kDa subunit family. In terms of assembly, composed of 13 different subunits. Subunits NuoCD, E, F, and G constitute the peripheral sector of the complex. The cofactor is [2Fe-2S] cluster. Requires [4Fe-4S] cluster as cofactor.

It carries out the reaction a quinone + NADH + 5 H(+)(in) = a quinol + NAD(+) + 4 H(+)(out). In terms of biological role, NDH-1 shuttles electrons from NADH, via FMN and iron-sulfur (Fe-S) centers, to quinones in the respiratory chain. The immediate electron acceptor for the enzyme in this species is believed to be ubiquinone. Couples the redox reaction to proton translocation (for every two electrons transferred, four hydrogen ions are translocated across the cytoplasmic membrane), and thus conserves the redox energy in a proton gradient. The chain is NADH-quinone oxidoreductase subunit G (nuoG) from Yersinia pestis.